Consider the following 301-residue polypeptide: MDSARALIARGWGVSLVSRCLRVSRAQLHVILRRTDDWMDGRRSRHTDDTDVLLRIHHVIGELPTYGYRRVWALLRRQAELDGMPAINAKRVYRIMRQNALLLERKPAVPPSKRAHTGRVAVKESNQRWCSDGFEFCCDNGERLRVTFALDCCDREALHWAVTTGGFNSETVQDVMLGAVERRFGNDLPSSPVEWLTDNGSCYRANETRQFARMLGLEPKNTAVRSPESNGIAESFVKTIKRDYISIMPKPDGLTAAKNLAEAFEHYNEWHPHSALGYRSPREYLRQRACNGLSDNRCLEI.

An Integrase catalytic domain is found at 106 to 289; sequence KPAVPPSKRA…SPREYLRQRA (184 aa).

Its function is as follows. Involved in the transposition of the insertion sequence IS2. This Escherichia coli (strain K12) protein is Transposase InsD for insertion element IS2D (insD2).